Here is a 248-residue protein sequence, read N- to C-terminus: Small ribosomal subunit protein uS3 (248 aa).

A KH type-2 domain is found at 38–106; sequence VREYLVKTLD…QVALNILEVK (69 aa). The span at 213-230 shows a compositional bias: basic and acidic residues; that stretch reads ESEINAPAERRGRGDRNG. Residues 213 to 248 form a disordered region; it reads ESEINAPAERRGRGDRNGRPRRGGQRRQRSEQKQEG.

It belongs to the universal ribosomal protein uS3 family. Part of the 30S ribosomal subunit. Forms a tight complex with proteins S10 and S14.

Binds the lower part of the 30S subunit head. Binds mRNA in the 70S ribosome, positioning it for translation. The sequence is that of Small ribosomal subunit protein uS3 from Corynebacterium diphtheriae (strain ATCC 700971 / NCTC 13129 / Biotype gravis).